The following is a 67-amino-acid chain: Large ribosomal subunit protein bL35 (67 aa).

It belongs to the bacterial ribosomal protein bL35 family.

This is Large ribosomal subunit protein bL35 from Sinorhizobium fredii (strain NBRC 101917 / NGR234).